Here is a 114-residue protein sequence, read N- to C-terminus: MNKQDPKRSNEPPVWLMFSAGGTISAICFPVLLLILGVLLPLGLVPVENIVAFAHTWFGKLVILAVTIFPMWAGMHRVHHGLHDLKIHFPAGGWVFYGLSALYSVIVFFAVIAL.

3 helical membrane passes run 27 to 47 (ICFPVLLLILGVLLPLGLVPV), 50 to 70 (IVAFAHTWFGKLVILAVTIFP), and 94 to 114 (WVFYGLSALYSVIVFFAVIAL).

It belongs to the FrdD family. Part of an enzyme complex containing four subunits: a flavoprotein (FrdA), an iron-sulfur protein (FrdB), and two hydrophobic anchor proteins (FrdC and FrdD).

It localises to the cell inner membrane. Its function is as follows. Anchors the catalytic components of the fumarate reductase complex to the cell membrane, binds quinones. The sequence is that of Fumarate reductase subunit D from Actinobacillus pleuropneumoniae serotype 3 (strain JL03).